We begin with the raw amino-acid sequence, 388 residues long: Chorismate synthase (388 aa).

Arg39 and Arg45 together coordinate NADP(+). Residues 130-132, 251-252, Gly296, 311-315, and Arg337 contribute to the FMN site; these read RSS, NA, and KPIPT.

The protein belongs to the chorismate synthase family. As to quaternary structure, homotetramer. FMNH2 is required as a cofactor.

It catalyses the reaction 5-O-(1-carboxyvinyl)-3-phosphoshikimate = chorismate + phosphate. Its pathway is metabolic intermediate biosynthesis; chorismate biosynthesis; chorismate from D-erythrose 4-phosphate and phosphoenolpyruvate: step 7/7. In terms of biological role, catalyzes the anti-1,4-elimination of the C-3 phosphate and the C-6 proR hydrogen from 5-enolpyruvylshikimate-3-phosphate (EPSP) to yield chorismate, which is the branch point compound that serves as the starting substrate for the three terminal pathways of aromatic amino acid biosynthesis. This reaction introduces a second double bond into the aromatic ring system. This is Chorismate synthase from Geobacillus thermodenitrificans (strain NG80-2).